Consider the following 44-residue polypeptide: uncharacterized protein (44 aa).

A helical membrane pass occupies residues 4-24; sequence ISSILIRGGGVLIVVILLLWI.

It localises to the membrane. This is an uncharacterized protein from Ornithodoros (relapsing fever ticks).